A 118-amino-acid polypeptide reads, in one-letter code: uncharacterized protein (118 aa).

The chain crosses the membrane as a helical span at residues 21 to 38 (IVYFFFFFGLETFFSIIN).

It localises to the membrane. This is an uncharacterized protein from Dictyostelium discoideum (Social amoeba).